A 220-amino-acid chain; its full sequence is Ribosomal RNA large subunit methyltransferase E (220 aa).

S-adenosyl-L-methionine-binding residues include Gly-60, Trp-62, Asp-92, Asp-108, and Asp-133. Lys-173 (proton acceptor) is an active-site residue. Residues 197–220 are disordered; that stretch reads RKPKASRDKSSETFILGRQLKQPR.

This sequence belongs to the class I-like SAM-binding methyltransferase superfamily. RNA methyltransferase RlmE family.

Its subcellular location is the cytoplasm. The catalysed reaction is uridine(2552) in 23S rRNA + S-adenosyl-L-methionine = 2'-O-methyluridine(2552) in 23S rRNA + S-adenosyl-L-homocysteine + H(+). Functionally, specifically methylates the uridine in position 2552 of 23S rRNA at the 2'-O position of the ribose in the fully assembled 50S ribosomal subunit. The polypeptide is Ribosomal RNA large subunit methyltransferase E (Burkholderia ambifaria (strain MC40-6)).